The sequence spans 1073 residues: Ubiquitin carboxyl-terminal hydrolase 53 (1073 aa).

In terms of domain architecture, USP spans 30–351; that stretch reads KGLLNEPGQN…QPLLLFYANP (322 aa). C41 serves as the catalytic Nucleophile. Residues H66, C68, C73, C76, H132, C144, C149, H152, C165, C168, C224, and C228 each coordinate Zn(2+). The active-site Proton acceptor is H301. 2 disordered regions span residues 391-437 and 485-636; these read LKEN…HIDQ and LSHF…PKQK. Over residues 407–418 the composition is skewed to polar residues; that stretch reads KFPTDNISSSNR. Residues 524 to 541 are compositionally biased toward low complexity; the sequence is QSRASAQIISSSKSQILA. Residues 553–563 show a composition bias toward polar residues; sequence DNGTGYDTDSS. Low complexity predominate over residues 612–627; that stretch reads NISNKPKSSKDPSFSN.

It belongs to the peptidase C19 family. In terms of assembly, interacts (via the C-terminal region) with the heterodimer TJP1:TJP2. Expressed predominantly in skeletal muscle and heart.

It is found in the cell junction. The protein localises to the tight junction. The catalysed reaction is Thiol-dependent hydrolysis of ester, thioester, amide, peptide and isopeptide bonds formed by the C-terminal Gly of ubiquitin (a 76-residue protein attached to proteins as an intracellular targeting signal).. Deubiquitinase that mediates 'Lys-63'-linked deubiquitination of tight junction proteins, such as MARVELD2 and LSR, and which is involved in the survival of auditory hair cells and hearing. Specifically cleaves 'Lys-63'-linked polyubiquitin chains composed of at least 3 ubiquitin molecules, while it is not able to deubiquitinate substrates with shorter ubiquitin chains: recognizes ubiquitin chain in position S2 and catalyzes en bloc cleavage of polyubiquitin chains from substrate proteins. Probably acts by modulating the barrier properties and mechanical stability of tight junctions via deubiquitination of MARVELD2 and LSR. This chain is Ubiquitin carboxyl-terminal hydrolase 53, found in Homo sapiens (Human).